We begin with the raw amino-acid sequence, 332 residues long: Probable isoaspartyl peptidase/L-asparaginase CG7860 (332 aa).

The active-site Nucleophile is T188. Substrate contacts are provided by residues 216 to 219 (RIGD) and 239 to 242 (TGHG).

The protein belongs to the Ntn-hydrolase family. In terms of assembly, heterodimer of an alpha and beta chain produced by autocleavage. In terms of processing, cleaved into an alpha and beta chain by autocatalysis; this activates the enzyme. The N-terminal residue of the beta subunit is responsible for the nucleophile hydrolase activity.

It catalyses the reaction L-asparagine + H2O = L-aspartate + NH4(+). The enzyme catalyses Cleavage of a beta-linked Asp residue from the N-terminus of a polypeptide.. Its function is as follows. Has both L-asparaginase and beta-aspartyl peptidase activity. Does not have aspartylglucosaminidase activity and is inactive toward GlcNAc-L-Asn. Likewise, has no activity toward glutamine. The polypeptide is Probable isoaspartyl peptidase/L-asparaginase CG7860 (Drosophila melanogaster (Fruit fly)).